Here is a 449-residue protein sequence, read N- to C-terminus: Glucose-6-phosphate isomerase (449 aa).

E291 acts as the Proton donor in catalysis. Catalysis depends on residues H312 and K426.

This sequence belongs to the GPI family.

The protein localises to the cytoplasm. It carries out the reaction alpha-D-glucose 6-phosphate = beta-D-fructose 6-phosphate. Its pathway is carbohydrate biosynthesis; gluconeogenesis. It functions in the pathway carbohydrate degradation; glycolysis; D-glyceraldehyde 3-phosphate and glycerone phosphate from D-glucose: step 2/4. In terms of biological role, catalyzes the reversible isomerization of glucose-6-phosphate to fructose-6-phosphate. This Clostridium botulinum (strain Eklund 17B / Type B) protein is Glucose-6-phosphate isomerase.